A 370-amino-acid chain; its full sequence is tRNA-specific 2-thiouridylase MnmA (370 aa).

ATP is bound by residues 8–15 and Met34; that span reads GMSGGVDS. Residues 104–106 form an interaction with target base in tRNA region; sequence NPD. Cys109 (nucleophile) is an active-site residue. Cys109 and Cys202 form a disulfide bridge. Gly134 serves as a coordination point for ATP. Residues 152-154 are interaction with tRNA; the sequence is KDQ. Cys202 acts as the Cysteine persulfide intermediate in catalysis. The segment at 309–310 is interaction with tRNA; the sequence is RY.

The protein belongs to the MnmA/TRMU family.

It is found in the cytoplasm. It carries out the reaction S-sulfanyl-L-cysteinyl-[protein] + uridine(34) in tRNA + AH2 + ATP = 2-thiouridine(34) in tRNA + L-cysteinyl-[protein] + A + AMP + diphosphate + H(+). Its function is as follows. Catalyzes the 2-thiolation of uridine at the wobble position (U34) of tRNA, leading to the formation of s(2)U34. This is tRNA-specific 2-thiouridylase MnmA from Metamycoplasma arthritidis (strain 158L3-1) (Mycoplasma arthritidis).